Consider the following 260-residue polypeptide: Hemin import ATP-binding protein HmuV (260 aa).

Positions 3–239 (LHAQQISLSI…QRLSEVYGCD (237 aa)) constitute an ABC transporter domain. Residue 35 to 42 (GPNGSGKS) coordinates ATP.

The protein belongs to the ABC transporter superfamily. Heme (hemin) importer (TC 3.A.1.14.5) family. The complex is composed of two ATP-binding proteins (HmuV), two transmembrane proteins (HmuU) and a solute-binding protein (HmuT).

It is found in the cell inner membrane. Part of the ABC transporter complex HmuTUV involved in hemin import. Responsible for energy coupling to the transport system. The protein is Hemin import ATP-binding protein HmuV of Ruegeria sp. (strain TM1040) (Silicibacter sp.).